A 185-amino-acid polypeptide reads, in one-letter code: Ribosome maturation factor RimM (185 aa).

The PRC barrel domain occupies 108–183 (PGEFHVTDLL…RLEIKTIPGL (76 aa)).

This sequence belongs to the RimM family. In terms of assembly, binds ribosomal protein uS19.

It localises to the cytoplasm. Its function is as follows. An accessory protein needed during the final step in the assembly of 30S ribosomal subunit, possibly for assembly of the head region. Essential for efficient processing of 16S rRNA. May be needed both before and after RbfA during the maturation of 16S rRNA. It has affinity for free ribosomal 30S subunits but not for 70S ribosomes. The sequence is that of Ribosome maturation factor RimM from Synechocystis sp. (strain ATCC 27184 / PCC 6803 / Kazusa).